The sequence spans 68 residues: Large ribosomal subunit protein bL32 (68 aa).

The segment at 1-24 (MAVPQNRVTRSRRNMRRSHDALVA) is disordered.

The protein belongs to the bacterial ribosomal protein bL32 family.

This Paracoccus denitrificans (strain Pd 1222) protein is Large ribosomal subunit protein bL32.